The following is a 101-amino-acid chain: Small ribosomal subunit protein bS18c (101 aa).

The protein belongs to the bacterial ribosomal protein bS18 family. In terms of assembly, part of the 30S ribosomal subunit.

It is found in the plastid. The protein resides in the chloroplast. The sequence is that of Small ribosomal subunit protein bS18c from Vitis vinifera (Grape).